Here is a 602-residue protein sequence, read N- to C-terminus: Aspartate--tRNA(Asp/Asn) ligase (602 aa).

Glu176 is a binding site for L-aspartate. The interval 200–203 (QQFK) is aspartate. Residues Arg222 and His452 each contribute to the L-aspartate site. 222-224 (RDE) serves as a coordination point for ATP. Residue Glu490 participates in ATP binding. Arg497 provides a ligand contact to L-aspartate. ATP is bound at residue 542-545 (GIDR).

Belongs to the class-II aminoacyl-tRNA synthetase family. Type 1 subfamily. Homodimer.

It is found in the cytoplasm. It carries out the reaction tRNA(Asx) + L-aspartate + ATP = L-aspartyl-tRNA(Asx) + AMP + diphosphate. Its function is as follows. Aspartyl-tRNA synthetase with relaxed tRNA specificity since it is able to aspartylate not only its cognate tRNA(Asp) but also tRNA(Asn). Reaction proceeds in two steps: L-aspartate is first activated by ATP to form Asp-AMP and then transferred to the acceptor end of tRNA(Asp/Asn). The protein is Aspartate--tRNA(Asp/Asn) ligase of Rickettsia africae (strain ESF-5).